Reading from the N-terminus, the 357-residue chain is MNTMKRMDCRDLNQSELTQHCAELGLPKFRGRQVFQWVQQKAVQNWEELKNIGAGDRQKLQDGLFLQPLRKVREQISQDGTRKFLFRCADGETLECVLMDYDRRKNRDRHTVCVSTQIGCAVGCAFCATGLGGWRRNLSPGEILGQVLDITYLMRQEDPDFQVTNIVFMGMGEPLLNYEAVLKAIELLNDPEGQGIGMRRMTISTSGVAPKIRQLAKDNPQVGLAVSLHSAHNTTRDQLIPMNRKYPLEELMEACRDYTTLTNRRITFEIALISGQATLEAAQAVGHLLKRQLAHVNLIPVNPVAGTGMARPTAKEVQQFAQCLESMGIPVSVREEKGTDIDAACGQLRRQLECEQK.

Glu-95 (proton acceptor) is an active-site residue. In terms of domain architecture, Radical SAM core spans 106–340 (NRDRHTVCVS…VSVREEKGTD (235 aa)). A disulfide bond links Cys-113 and Cys-345. Positions 120, 124, and 127 each coordinate [4Fe-4S] cluster. S-adenosyl-L-methionine contacts are provided by residues 172–173 (GE), Ser-204, 227–229 (SLH), and Asn-302. The active-site S-methylcysteine intermediate is Cys-345.

Belongs to the radical SAM superfamily. RlmN family. The cofactor is [4Fe-4S] cluster.

The protein localises to the cytoplasm. The catalysed reaction is adenosine(2503) in 23S rRNA + 2 reduced [2Fe-2S]-[ferredoxin] + 2 S-adenosyl-L-methionine = 2-methyladenosine(2503) in 23S rRNA + 5'-deoxyadenosine + L-methionine + 2 oxidized [2Fe-2S]-[ferredoxin] + S-adenosyl-L-homocysteine. It catalyses the reaction adenosine(37) in tRNA + 2 reduced [2Fe-2S]-[ferredoxin] + 2 S-adenosyl-L-methionine = 2-methyladenosine(37) in tRNA + 5'-deoxyadenosine + L-methionine + 2 oxidized [2Fe-2S]-[ferredoxin] + S-adenosyl-L-homocysteine. Its function is as follows. Specifically methylates position 2 of adenine 2503 in 23S rRNA and position 2 of adenine 37 in tRNAs. This is Probable dual-specificity RNA methyltransferase RlmN from Desulfitobacterium hafniense (strain Y51).